The following is a 1790-amino-acid chain: Atrochrysone carboxylic acid synthase (1790 aa).

An N-terminal acylcarrier protein transacylase domain (SAT) region spans residues 27 to 265 (RDLQDLFRQA…ALPVYGGLCH (239 aa)). One can recognise a Ketosynthase family 3 (KS3) domain in the interval 399–833 (QSKLAIVGMS…GGNTTMILED (435 aa)). Residues C572, H708, and H751 each act as for beta-ketoacyl synthase activity in the active site. The malonyl-CoA:ACP transacylase (MAT) domain stretch occupies residues 934-1254 (FSFTGQGASH…IAQLYTVGVD (321 aa)). The interval 1323 to 1475 (QQIVEQVFDT…SLTHLVRDRI (153 aa)) is N-terminal hotdog fold. The region spanning 1323–1634 (QQIVEQVFDT…FHRYRRILLE (312 aa)) is the PKS/mFAS DH domain. H1357 (proton acceptor; for dehydratase activity) is an active-site residue. Residues 1357-1631 (HRMNDCGVAT…GIEFHRYRRI (275 aa)) are product template (PT) domain. Residues 1487–1634 (ANRLSHNMAY…FHRYRRILLE (148 aa)) are C-terminal hotdog fold. D1545 acts as the Proton donor; for dehydratase activity in catalysis. The segment at 1644-1667 (NLDDTTETKDISSSTQHSVPVSRQ) is disordered. The span at 1654-1664 (ISSSTQHSVPV) shows a compositional bias: polar residues. One can recognise a Carrier domain in the interval 1715–1789 (SSITNRAMQL…DLRNWLEETY (75 aa)). S1749 is subject to O-(pantetheine 4'-phosphoryl)serine.

The catalysed reaction is holo-[ACP] + 8 malonyl-CoA + 8 H(+) = atrochrysone carboxyl-[ACP] + 8 CO2 + 8 CoA + 2 H2O. Its pathway is pigment biosynthesis. Functionally, non-reducing polyketide synthase; part of the gene cluster that mediates the biosynthesis of the bianthraquinone cladofulvin, a conidial pigment not required for virulence but that plays a role in fitness and resistance to environmental stresses including UV light and low-temperature stress. The pathway begins with the synthesis of atrochrysone thioester by the polyketide synthase (PKS) claG. The atrochrysone carboxyl ACP thioesterase claF then breaks the thioester bond and releases the atrochrysone carboxylic acid from claG. This compound is decarboxylated by claH to yield emodin, which is further converted to chrysophanol hydroquinone by the reductase claC and the dehydratase claB. The cytochrome P450 monooxygenase claM then catalyzes the dimerization of nataloe-emodin to cladofulvin. The sequence is that of Atrochrysone carboxylic acid synthase from Passalora fulva (Tomato leaf mold).